An 86-amino-acid polypeptide reads, in one-letter code: Small ribosomal subunit protein bS16 (86 aa).

It belongs to the bacterial ribosomal protein bS16 family.

In Legionella pneumophila (strain Paris), this protein is Small ribosomal subunit protein bS16.